Reading from the N-terminus, the 692-residue chain is ABC1 family protein C21C3.03, mitochondrial (692 aa).

The N-terminal 91 residues, 1-91 (MISFSHWNSH…RKFTTRQKSE (91 aa)), are a transit peptide targeting the mitochondrion. 2 helical membrane-spanning segments follow: residues 96-116 (WRIL…LWIL) and 161-181 (LFII…ISFL).

Belongs to the protein kinase superfamily. ADCK protein kinase family.

It localises to the mitochondrion membrane. This is ABC1 family protein C21C3.03, mitochondrial from Schizosaccharomyces pombe (strain 972 / ATCC 24843) (Fission yeast).